We begin with the raw amino-acid sequence, 336 residues long: tRNA N6-adenosine threonylcarbamoyltransferase (336 aa).

Residues His112 and His116 each contribute to the Fe cation site. Substrate is bound by residues 136–140, Asp169, Gly182, and Asn276; that span reads LVSGG. Asp304 serves as a coordination point for Fe cation.

The protein belongs to the KAE1 / TsaD family. The cofactor is Fe(2+).

The protein resides in the cytoplasm. It carries out the reaction L-threonylcarbamoyladenylate + adenosine(37) in tRNA = N(6)-L-threonylcarbamoyladenosine(37) in tRNA + AMP + H(+). In terms of biological role, required for the formation of a threonylcarbamoyl group on adenosine at position 37 (t(6)A37) in tRNAs that read codons beginning with adenine. Is involved in the transfer of the threonylcarbamoyl moiety of threonylcarbamoyl-AMP (TC-AMP) to the N6 group of A37, together with TsaE and TsaB. TsaD likely plays a direct catalytic role in this reaction. This chain is tRNA N6-adenosine threonylcarbamoyltransferase, found in Francisella tularensis subsp. tularensis (strain FSC 198).